The sequence spans 99 residues: NADH-quinone oxidoreductase subunit K (99 aa).

Helical transmembrane passes span 3-23, 28-48, and 59-79; these read PDNY…GVML, IVVF…FVTF, and VIAF…LGII.

This sequence belongs to the complex I subunit 4L family. In terms of assembly, NDH-1 is composed of 14 different subunits. Subunits NuoA, H, J, K, L, M, N constitute the membrane sector of the complex.

The protein localises to the cell membrane. It carries out the reaction a quinone + NADH + 5 H(+)(in) = a quinol + NAD(+) + 4 H(+)(out). Functionally, NDH-1 shuttles electrons from NADH, via FMN and iron-sulfur (Fe-S) centers, to quinones in the respiratory chain. The immediate electron acceptor for the enzyme in this species is believed to be a menaquinone. Couples the redox reaction to proton translocation (for every two electrons transferred, four hydrogen ions are translocated across the cytoplasmic membrane), and thus conserves the redox energy in a proton gradient. This Mycobacteroides abscessus (strain ATCC 19977 / DSM 44196 / CCUG 20993 / CIP 104536 / JCM 13569 / NCTC 13031 / TMC 1543 / L948) (Mycobacterium abscessus) protein is NADH-quinone oxidoreductase subunit K.